Consider the following 545-residue polypeptide: CTP synthase (545 aa).

An amidoligase domain region spans residues 1 to 265; the sequence is MNGIKHIFIT…DKFVIKHLDL (265 aa). Ser15 serves as a coordination point for CTP. Ser15 provides a ligand contact to UTP. Residues 16 to 21 and Asp73 each bind ATP; that span reads SIGKGL. Residues Asp73 and Glu141 each contribute to the Mg(2+) site. Residues 148–150, 188–193, and Lys224 contribute to the CTP site; these read DIE and KTKPTQ. Residues 188–193 and Lys224 contribute to the UTP site; that span reads KTKPTQ. The 245-residue stretch at 290 to 534 folds into the Glutamine amidotransferase type-1 domain; that stretch reads EIAIIGKYTG…VAAALARKEI (245 aa). Gly349 contributes to the L-glutamine binding site. Residue Cys376 is the Nucleophile; for glutamine hydrolysis of the active site. L-glutamine is bound by residues 377 to 380, Glu400, and Arg460; that span reads LGMQ. Catalysis depends on residues His507 and Glu509.

The protein belongs to the CTP synthase family. As to quaternary structure, homotetramer.

The catalysed reaction is UTP + L-glutamine + ATP + H2O = CTP + L-glutamate + ADP + phosphate + 2 H(+). It catalyses the reaction L-glutamine + H2O = L-glutamate + NH4(+). It carries out the reaction UTP + NH4(+) + ATP = CTP + ADP + phosphate + 2 H(+). Its pathway is pyrimidine metabolism; CTP biosynthesis via de novo pathway; CTP from UDP: step 2/2. With respect to regulation, allosterically activated by GTP, when glutamine is the substrate; GTP has no effect on the reaction when ammonia is the substrate. The allosteric effector GTP functions by stabilizing the protein conformation that binds the tetrahedral intermediate(s) formed during glutamine hydrolysis. Inhibited by the product CTP, via allosteric rather than competitive inhibition. Functionally, catalyzes the ATP-dependent amination of UTP to CTP with either L-glutamine or ammonia as the source of nitrogen. Regulates intracellular CTP levels through interactions with the four ribonucleotide triphosphates. The protein is CTP synthase of Tropheryma whipplei (strain Twist) (Whipple's bacillus).